Reading from the N-terminus, the 347-residue chain is NADH-ubiquinone oxidoreductase chain 2 (347 aa).

The next 10 membrane-spanning stretches (helical) occupy residues 3–23, 25–45, 66–86, 111–131, 149–169, 178–198, 201–221, 237–257, 274–294, and 325–345; these read PPILIAILATVMTGTMIVMLS, HWLLIWIGFEMNMLAIIPILM, ASMLLMMGVTINLLYSGQWMI, FHFWVPEVTQGISLSSGMILL, INTDLMTLVALASVLVGGWGG, IMAYSSIAHMGWMAAIIIYNP, MFLNLSLYILMTLSTFMLFML, IPLIASTILTLMLSLGGLPPL, DMIVVPTLMAITALLNLYFYM, and LLPPLIITSTMLLPIMPMMSI.

The protein belongs to the complex I subunit 2 family. As to quaternary structure, core subunit of respiratory chain NADH dehydrogenase (Complex I) which is composed of 45 different subunits. Interacts with TMEM242.

The protein localises to the mitochondrion inner membrane. The enzyme catalyses a ubiquinone + NADH + 5 H(+)(in) = a ubiquinol + NAD(+) + 4 H(+)(out). Core subunit of the mitochondrial membrane respiratory chain NADH dehydrogenase (Complex I) which catalyzes electron transfer from NADH through the respiratory chain, using ubiquinone as an electron acceptor. Essential for the catalytic activity and assembly of complex I. In Vulpes vulpes (Red fox), this protein is NADH-ubiquinone oxidoreductase chain 2.